Reading from the N-terminus, the 132-residue chain is MKFSGLFPFLLLALGTLALWAVEGAENEALKAGACPPRKSAQCFGNEKPRCSSDWQCPHKKKCCLDTCGTECLDPVNITNPVKKKPGTCPVIHGQCLMLKPLNHCETDDQCIGALKCCKAMCGKVCLSPVKA.

The N-terminal stretch at 1 to 24 (MKFSGLFPFLLLALGTLALWAVEG) is a signal peptide. Positions 28 to 76 (EALKAGACPPRKSAQCFGNEKPRCSSDWQCPHKKKCCLDTCGTECLDPV) constitute a WAP 1 domain. Intrachain disulfides connect cysteine 35–cysteine 64, cysteine 43–cysteine 68, cysteine 51–cysteine 63, and cysteine 57–cysteine 72. Asparagine 77 is a glycosylation site (N-linked (GlcNAc...) asparagine). The WAP 2 domain maps to 82 to 130 (VKKKPGTCPVIHGQCLMLKPLNHCETDDQCIGALKCCKAMCGKVCLSPV). 4 disulfide bridges follow: cysteine 89–cysteine 118, cysteine 96–cysteine 122, cysteine 105–cysteine 117, and cysteine 111–cysteine 126.

Interacts with GRN; interaction protects progranulin from proteolysis. In terms of tissue distribution, detected in bronchoalveolar fluid (at protein level). Detected in large and small intestine, trachea, skin, lung and tongue.

Its subcellular location is the secreted. Acid-stable proteinase inhibitor with strong affinities for trypsin, chymotrypsin, elastase, and cathepsin G. Modulates the inflammatory and immune responses after bacterial infection, and after infection by the intracellular parasite L.major. Down-regulates responses to bacterial lipopolysaccharide (LPS). Plays a role in regulating the activation of NF-kappa-B and inflammatory responses. Has antimicrobial activity against mycobacteria, but not against salmonella. Contributes to normal resistance against infection by M.tuberculosis. Required for normal resistance to infection by L.major. Required for normal wound healing, probably by preventing tissue damage by limiting protease activity. Together with ELANE, required for normal differentiation and proliferation of bone marrow myeloid cells. This is Antileukoproteinase (SLPI) from Ovis aries (Sheep).